Reading from the N-terminus, the 235-residue chain is 1-(5-phosphoribosyl)-5-[(5-phosphoribosylamino)methylideneamino] imidazole-4-carboxamide isomerase (235 aa).

Residue aspartate 8 is the Proton acceptor of the active site. Aspartate 127 (proton donor) is an active-site residue.

The protein belongs to the HisA/HisF family.

The protein localises to the cytoplasm. It carries out the reaction 1-(5-phospho-beta-D-ribosyl)-5-[(5-phospho-beta-D-ribosylamino)methylideneamino]imidazole-4-carboxamide = 5-[(5-phospho-1-deoxy-D-ribulos-1-ylimino)methylamino]-1-(5-phospho-beta-D-ribosyl)imidazole-4-carboxamide. It functions in the pathway amino-acid biosynthesis; L-histidine biosynthesis; L-histidine from 5-phospho-alpha-D-ribose 1-diphosphate: step 4/9. The chain is 1-(5-phosphoribosyl)-5-[(5-phosphoribosylamino)methylideneamino] imidazole-4-carboxamide isomerase from Nautilia profundicola (strain ATCC BAA-1463 / DSM 18972 / AmH).